Reading from the N-terminus, the 379-residue chain is UDP-N-acetylglucosamine--N-acetylmuramyl-(pentapeptide) pyrophosphoryl-undecaprenol N-acetylglucosamine transferase (379 aa).

UDP-N-acetyl-alpha-D-glucosamine-binding positions include Thr17–Gly19, Asn128, Arg169, Ser197, and Gln298.

It belongs to the glycosyltransferase 28 family. MurG subfamily.

It localises to the cell inner membrane. The enzyme catalyses di-trans,octa-cis-undecaprenyl diphospho-N-acetyl-alpha-D-muramoyl-L-alanyl-D-glutamyl-meso-2,6-diaminopimeloyl-D-alanyl-D-alanine + UDP-N-acetyl-alpha-D-glucosamine = di-trans,octa-cis-undecaprenyl diphospho-[N-acetyl-alpha-D-glucosaminyl-(1-&gt;4)]-N-acetyl-alpha-D-muramoyl-L-alanyl-D-glutamyl-meso-2,6-diaminopimeloyl-D-alanyl-D-alanine + UDP + H(+). The protein operates within cell wall biogenesis; peptidoglycan biosynthesis. Functionally, cell wall formation. Catalyzes the transfer of a GlcNAc subunit on undecaprenyl-pyrophosphoryl-MurNAc-pentapeptide (lipid intermediate I) to form undecaprenyl-pyrophosphoryl-MurNAc-(pentapeptide)GlcNAc (lipid intermediate II). This Brucella canis (strain ATCC 23365 / NCTC 10854 / RM-666) protein is UDP-N-acetylglucosamine--N-acetylmuramyl-(pentapeptide) pyrophosphoryl-undecaprenol N-acetylglucosamine transferase.